A 540-amino-acid chain; its full sequence is Chaperonin GroEL (540 aa).

ATP-binding positions include 29 to 32, 86 to 90, G413, 476 to 478, and D492; these read TIGP, DGTTT, and NAA.

It belongs to the chaperonin (HSP60) family. Forms a cylinder of 14 subunits composed of two heptameric rings stacked back-to-back. Interacts with the co-chaperonin GroES.

The protein resides in the cytoplasm. The catalysed reaction is ATP + H2O + a folded polypeptide = ADP + phosphate + an unfolded polypeptide.. Functionally, together with its co-chaperonin GroES, plays an essential role in assisting protein folding. The GroEL-GroES system forms a nano-cage that allows encapsulation of the non-native substrate proteins and provides a physical environment optimized to promote and accelerate protein folding. This Staphylococcus saprophyticus subsp. saprophyticus (strain ATCC 15305 / DSM 20229 / NCIMB 8711 / NCTC 7292 / S-41) protein is Chaperonin GroEL.